The primary structure comprises 370 residues: Putative L-lysine 2,3-aminomutase aq_454 (370 aa).

One can recognise a Radical SAM core domain in the interval 107–322 (HRYPDRVLLN…RGRLSGFGIP (216 aa)). Residues Cys-121, Cys-125, and Cys-128 each contribute to the [4Fe-4S] cluster site. Lys-334 bears the N6-(pyridoxal phosphate)lysine mark.

It belongs to the radical SAM superfamily. KamA family. It depends on [4Fe-4S] cluster as a cofactor. Pyridoxal 5'-phosphate serves as cofactor.

The protein is Putative L-lysine 2,3-aminomutase aq_454 of Aquifex aeolicus (strain VF5).